Reading from the N-terminus, the 555-residue chain is Formate--tetrahydrofolate ligase (555 aa).

Position 65–72 (65–72 (TPAGEGKT)) interacts with ATP.

This sequence belongs to the formate--tetrahydrofolate ligase family.

It catalyses the reaction (6S)-5,6,7,8-tetrahydrofolate + formate + ATP = (6R)-10-formyltetrahydrofolate + ADP + phosphate. The protein operates within one-carbon metabolism; tetrahydrofolate interconversion. This Caldanaerobacter subterraneus subsp. tengcongensis (strain DSM 15242 / JCM 11007 / NBRC 100824 / MB4) (Thermoanaerobacter tengcongensis) protein is Formate--tetrahydrofolate ligase.